Consider the following 198-residue polypeptide: Large ribosomal subunit protein bL12m (198 aa).

The transit peptide at 1–36 directs the protein to the mitochondrion; the sequence is MLPAAARPLWGPCLGLRAAAFRLARRQVPCVCAVRH. N6-acetyllysine occurs at positions 125, 138, 142, and 144. Lys150 carries the N6-acetyllysine; alternate modification. Lys150 carries the post-translational modification N6-succinyllysine; alternate. Lys150 is covalently cross-linked (Glycyl lysine isopeptide (Lys-Gly) (interchain with G-Cter in ubiquitin)). Residue Lys162 is modified to N6-succinyllysine. Lys163 and Lys173 each carry N6-acetyllysine. Residue Lys178 is modified to N6-acetyllysine; alternate. Position 178 is an N6-succinyllysine; alternate (Lys178). Lys185 bears the N6-acetyllysine mark.

It belongs to the bacterial ribosomal protein bL12 family. In terms of assembly, component of the mitochondrial large ribosomal subunit (mt-LSU). Mature mammalian 55S mitochondrial ribosomes consist of a small (28S) and a large (39S) subunit. The 28S small subunit contains a 12S ribosomal RNA (12S mt-rRNA) and 30 different proteins. The 39S large subunit contains a 16S rRNA (16S mt-rRNA), a copy of mitochondrial valine transfer RNA (mt-tRNA(Val)), which plays an integral structural role, and 52 different proteins. bL12m interacts with NOA1. Post-translationally, two mature forms are produced by differential two-step proteolytic cleavage. Cleaved by the mitochondrial processing protease to produce the long mature form and subsequently by the mitochondrial intermediate protease to produce the short mature form. In the presence of CUL3, undergoes 'Lys-63'-linked ubiquitination at Lys-150 which results in proteasomal degradation.

It is found in the mitochondrion matrix. As a component of the mitochondrial large ribosomal subunit, plays a role in mitochondrial translation. When present in mitochondria as a free protein not associated with the ribosome, associates with mitochondrial RNA polymerase POLRMT to activate transcription. Required for POLRMT stability. This chain is Large ribosomal subunit protein bL12m (MRPL12), found in Homo sapiens (Human).